Reading from the N-terminus, the 770-residue chain is DNA ligase 1 (770 aa).

Residues 1–18 (MSTGEGTAEQTATGTPAQ) are compositionally biased toward low complexity. A disordered region spans residues 1 to 27 (MSTGEGTAEQTATGTPAQNGRESIPSD). NAD(+)-binding positions include 57-61 (DAEFD), 106-107 (SL), and glutamate 142. Residue lysine 144 is the N6-AMP-lysine intermediate of the active site. 4 residues coordinate NAD(+): arginine 165, glutamate 202, lysine 318, and lysine 342. Zn(2+) is bound by residues cysteine 439, cysteine 442, cysteine 458, and cysteine 464. The BRCT domain occupies 657 to 746 (STPRTLEGLT…PAAVGDAAEA (90 aa)). The interval 741 to 770 (GDAAEADGGDAPEESAALQEEKAAAVEETA) is disordered. Residues 744–753 (AEADGGDAPE) show a composition bias toward acidic residues. Over residues 759 to 770 (QEEKAAAVEETA) the composition is skewed to basic and acidic residues.

This sequence belongs to the NAD-dependent DNA ligase family. LigA subfamily. The cofactor is Mg(2+). Requires Mn(2+) as cofactor.

It catalyses the reaction NAD(+) + (deoxyribonucleotide)n-3'-hydroxyl + 5'-phospho-(deoxyribonucleotide)m = (deoxyribonucleotide)n+m + AMP + beta-nicotinamide D-nucleotide.. Its function is as follows. DNA ligase that catalyzes the formation of phosphodiester linkages between 5'-phosphoryl and 3'-hydroxyl groups in double-stranded DNA using NAD as a coenzyme and as the energy source for the reaction. It is essential for DNA replication and repair of damaged DNA. The polypeptide is DNA ligase 1 (Pseudarthrobacter chlorophenolicus (strain ATCC 700700 / DSM 12829 / CIP 107037 / JCM 12360 / KCTC 9906 / NCIMB 13794 / A6) (Arthrobacter chlorophenolicus)).